A 125-amino-acid chain; its full sequence is Anticoagulant salivary protein 14 (125 aa).

The first 21 residues, 1-21 (MGLTGTMLVLVSLAFFGSAAA), serve as a signal peptide directing secretion. N-linked (GlcNAc...) asparagine glycosylation is found at N26, N81, and N87. Positions 75-86 (GECHLTNNSGGP) are enriched in polar residues. Residues 75–125 (GECHLTNNSGGPNETDDYTPAPTEKPKQKKKKTKKTKKPKRKSKKDQEKNL) are disordered. The responsible for anticoagulant activity stretch occupies residues 91–125 (DYTPAPTEKPKQKKKKTKKTKKPKRKSKKDQEKNL). A compositionally biased stretch (basic residues) spans 101–118 (KQKKKKTKKTKKPKRKSK).

Belongs to the salp14 family. In terms of tissue distribution, salivary gland (at protein level). Saliva (at protein level).

It localises to the secreted. Functionally, salivary anticoagulant protein that facilitates blood feeding of adult ticks on vertebrate species. Inhibits host coagulation factor Xa (F10). Blocks the assembly and/or early activity of the prothrombinase complex (Xa-Va/F10-F5). Inhibits the lectin pathway of complement system activation in the host. The protein is Anticoagulant salivary protein 14 of Ixodes scapularis (Black-legged tick).